The primary structure comprises 429 residues: Tryptophan synthase beta chain 2 (429 aa).

A disordered region spans residues 18-40; the sequence is NINPDLPSPLPEPKNPEGGKNIE. N6-(pyridoxal phosphate)lysine is present on lysine 110.

The protein belongs to the TrpB family. Tetramer of two alpha and two beta chains. Pyridoxal 5'-phosphate is required as a cofactor.

The enzyme catalyses (1S,2R)-1-C-(indol-3-yl)glycerol 3-phosphate + L-serine = D-glyceraldehyde 3-phosphate + L-tryptophan + H2O. Its pathway is amino-acid biosynthesis; L-tryptophan biosynthesis; L-tryptophan from chorismate: step 5/5. The beta subunit is responsible for the synthesis of L-tryptophan from indole and L-serine. The protein is Tryptophan synthase beta chain 2 (trpB2) of Methanothermobacter thermautotrophicus (strain ATCC 29096 / DSM 1053 / JCM 10044 / NBRC 100330 / Delta H) (Methanobacterium thermoautotrophicum).